A 117-amino-acid chain; its full sequence is Large ribosomal subunit protein uL18 (117 aa).

This sequence belongs to the universal ribosomal protein uL18 family. In terms of assembly, part of the 50S ribosomal subunit; part of the 5S rRNA/L5/L18/L25 subcomplex. Contacts the 5S and 23S rRNAs.

In terms of biological role, this is one of the proteins that bind and probably mediate the attachment of the 5S RNA into the large ribosomal subunit, where it forms part of the central protuberance. This Pectobacterium atrosepticum (strain SCRI 1043 / ATCC BAA-672) (Erwinia carotovora subsp. atroseptica) protein is Large ribosomal subunit protein uL18.